A 262-amino-acid polypeptide reads, in one-letter code: Proenkephalin-A-A (262 aa).

A signal peptide spans 1–24 (MGLEARHCCMFLLVFASLSVEIRA). Intrachain disulfides connect C26–C48, C30–C52, and C33–C65. 5 consecutive propeptides follow at residues 110–131 (MDELYHAEPEEDDAGGEILAKN), 139–177 (EYDSDRDAADLLRELLATSGDPESSIYHDNNSETPGEIN), 190–201 (STDLEDETSGIQ), 211–221 (VGRPEWWEDYQ), and 229–253 (TRFTDSFLPSDEDGESYSKENPDME).

This sequence belongs to the opioid neuropeptide precursor family. In terms of processing, the N-terminal domain contains 6 conserved cysteines thought to be involved in disulfide bonding and/or processing.

The protein resides in the secreted. Functionally, enkephalin neuropeptides compete with and mimic the effects of opiate drugs. They play a role in a number of physiologic functions, including pain perception and responses to stress. In Xenopus laevis (African clawed frog), this protein is Proenkephalin-A-A (penk-a).